A 157-amino-acid chain; its full sequence is uncharacterized protein (157 aa).

The region spanning 9–146 (LLINYKTLDE…GDFYVWHPET (138 aa)) is the N-acetyltransferase domain.

This is an uncharacterized protein from Bacillus anthracis (strain CDC 684 / NRRL 3495).